Consider the following 373-residue polypeptide: Chaperone protein DnaJ (373 aa).

A J domain is found at 4 to 68 (NYYQILGVSK…QKRAAYDRLG (65 aa)). The segment at 136–214 (GIEKNINFSS…CHGMGRYHKQ (79 aa)) adopts a CR-type zinc-finger fold. Zn(2+) is bound by residues Cys-149, Cys-152, Cys-166, Cys-169, Cys-188, Cys-191, Cys-202, and Cys-205. 4 CXXCXGXG motif repeats span residues 149–156 (CDTCHGSG), 166–173 (CDACSGVG), 188–195 (CHKCQGNG), and 202–209 (CKKCHGMG).

The protein belongs to the DnaJ family. In terms of assembly, homodimer. Zn(2+) is required as a cofactor.

Its subcellular location is the cytoplasm. Participates actively in the response to hyperosmotic and heat shock by preventing the aggregation of stress-denatured proteins and by disaggregating proteins, also in an autonomous, DnaK-independent fashion. Unfolded proteins bind initially to DnaJ; upon interaction with the DnaJ-bound protein, DnaK hydrolyzes its bound ATP, resulting in the formation of a stable complex. GrpE releases ADP from DnaK; ATP binding to DnaK triggers the release of the substrate protein, thus completing the reaction cycle. Several rounds of ATP-dependent interactions between DnaJ, DnaK and GrpE are required for fully efficient folding. Also involved, together with DnaK and GrpE, in the DNA replication of plasmids through activation of initiation proteins. This is Chaperone protein DnaJ from Rickettsia rickettsii (strain Iowa).